Reading from the N-terminus, the 193-residue chain is Dual-action ribosomal maturation protein DarP (193 aa).

A compositionally biased stretch (basic and acidic residues) spans 1–10; that stretch reads MRGRDEDTGE. 2 disordered regions span residues 1-20 and 171-193; these read MRGRDEDTGEFRGASRSQQR and QEQGLESGDSGLEDGESALEDDE. The span at 181 to 193 shows a compositional bias: acidic residues; sequence GLEDGESALEDDE.

It belongs to the DarP family.

The protein resides in the cytoplasm. Its function is as follows. Member of a network of 50S ribosomal subunit biogenesis factors which assembles along the 30S-50S interface, preventing incorrect 23S rRNA structures from forming. Promotes peptidyl transferase center (PTC) maturation. In Xanthomonas oryzae pv. oryzae (strain KACC10331 / KXO85), this protein is Dual-action ribosomal maturation protein DarP.